The chain runs to 152 residues: Ribosome maturation factor RimP (152 aa).

Belongs to the RimP family.

The protein resides in the cytoplasm. Required for maturation of 30S ribosomal subunits. The chain is Ribosome maturation factor RimP from Burkholderia multivorans (strain ATCC 17616 / 249).